The chain runs to 957 residues: Glycine dehydrogenase (decarboxylating) (957 aa).

K708 carries the N6-(pyridoxal phosphate)lysine modification.

This sequence belongs to the GcvP family. In terms of assembly, the glycine cleavage system is composed of four proteins: P, T, L and H. Pyridoxal 5'-phosphate is required as a cofactor.

It carries out the reaction N(6)-[(R)-lipoyl]-L-lysyl-[glycine-cleavage complex H protein] + glycine + H(+) = N(6)-[(R)-S(8)-aminomethyldihydrolipoyl]-L-lysyl-[glycine-cleavage complex H protein] + CO2. The glycine cleavage system catalyzes the degradation of glycine. The P protein binds the alpha-amino group of glycine through its pyridoxal phosphate cofactor; CO(2) is released and the remaining methylamine moiety is then transferred to the lipoamide cofactor of the H protein. The chain is Glycine dehydrogenase (decarboxylating) from Salmonella agona (strain SL483).